A 131-amino-acid chain; its full sequence is Transcription antitermination protein NusB (131 aa).

Belongs to the NusB family.

Involved in transcription antitermination. Required for transcription of ribosomal RNA (rRNA) genes. Binds specifically to the boxA antiterminator sequence of the ribosomal RNA (rrn) operons. The polypeptide is Transcription antitermination protein NusB (Campylobacter hominis (strain ATCC BAA-381 / DSM 21671 / CCUG 45161 / LMG 19568 / NCTC 13146 / CH001A)).